We begin with the raw amino-acid sequence, 367 residues long: Cyclin-D5-1 (367 aa).

The segment at 307–333 (QPTSPASKSTTTTTGKRSSSSSCSEST) is disordered.

It belongs to the cyclin family. Cyclin D subfamily.

The chain is Cyclin-D5-1 (CYCD5-1) from Oryza sativa subsp. japonica (Rice).